The primary structure comprises 1849 residues: Protein virilizer (1849 aa).

5 stretches are compositionally biased toward basic and acidic residues: residues 206-219, 242-265, 281-291, 332-347, and 785-818; these read QHYH…QREM, THSE…DWSR, RSRSDADEHKW, HSSE…EERS, and VEAK…AAEE. Disordered stretches follow at residues 206 to 364, 783 to 818, 1557 to 1584, 1666 to 1686, 1715 to 1782, and 1798 to 1849; these read QHYH…DEII, RVVE…AAEE, SASM…SSSG, GESK…EMTP, RGRG…NRGS, and IGSP…PYLR. Residues 1671–1684 are compositionally biased toward polar residues; sequence TLNLSGSPQSNREM. Residues 1732–1742 show a composition bias toward low complexity; that stretch reads SRPPNTSRPPS. Residues 1800–1818 show a composition bias toward polar residues; sequence SPSSWTESGGGSYRSTSES.

It belongs to the vir family. Component of the WMM complex, a N6-methyltransferase complex composed of a catalytic subcomplex, named MAC, and of an associated subcomplex, named MACOM. The MAC subcomplex is composed of Ime4/Mettl3 and Mettl14. The MACOM subcomplex is composed of fl(2)d, Flacc/Xio, Hakai, vir, and, in some cases of nito. Part of a complex containing fl(2)d, Sxl and vir.

It localises to the nucleus. Its function is as follows. Associated component of the WMM complex, a complex that mediates N6-methyladenosine (m6A) methylation of mRNAs, a modification that plays a role in the efficiency of mRNA splicing and is required for sex determination. Required for sex determination and dosage compensation via Sxl alternative splicing: m6A methylation acts as a key regulator of Sxl pre-mRNA and promotes female-specific alternative splicing of Sxl, which determines female physiognomy. M6A methylation is also required for neuronal functions. Required for proper inclusion of regulated exons in Ubx transcripts, leading to isoforms Ia/b and IIa/b. In Drosophila pseudoobscura pseudoobscura (Fruit fly), this protein is Protein virilizer (vir).